The following is a 497-amino-acid chain: uncharacterized protein (497 aa).

2 ABC transporter domains span residues 9–247 and 256–496; these read VSVR…MGQA and ARPA…TGMA. 41-48 provides a ligand contact to ATP; sequence GGNGAGKS.

The protein belongs to the ABC transporter superfamily. Ribose importer (TC 3.A.1.2.1) family.

It is found in the cell membrane. Its function is as follows. Probably part of the binding-protein-dependent transport system y4mIJK. This system probably transports a sugar. Probably responsible for energy coupling to the transport system. This is an uncharacterized protein from Sinorhizobium fredii (strain NBRC 101917 / NGR234).